The chain runs to 361 residues: Chorismate synthase (361 aa).

Residues Arg-48 and Arg-54 each contribute to the NADP(+) site. FMN-binding positions include 125–127 (RSS), 238–239 (NA), Gly-278, 293–297 (KPTSS), and Arg-319.

Belongs to the chorismate synthase family. In terms of assembly, homotetramer. FMNH2 is required as a cofactor.

It catalyses the reaction 5-O-(1-carboxyvinyl)-3-phosphoshikimate = chorismate + phosphate. It participates in metabolic intermediate biosynthesis; chorismate biosynthesis; chorismate from D-erythrose 4-phosphate and phosphoenolpyruvate: step 7/7. Its function is as follows. Catalyzes the anti-1,4-elimination of the C-3 phosphate and the C-6 proR hydrogen from 5-enolpyruvylshikimate-3-phosphate (EPSP) to yield chorismate, which is the branch point compound that serves as the starting substrate for the three terminal pathways of aromatic amino acid biosynthesis. This reaction introduces a second double bond into the aromatic ring system. The protein is Chorismate synthase of Shigella flexneri serotype 5b (strain 8401).